Reading from the N-terminus, the 505-residue chain is Maturase K (505 aa).

This sequence belongs to the intron maturase 2 family. MatK subfamily.

Its subcellular location is the plastid. The protein localises to the chloroplast. In terms of biological role, usually encoded in the trnK tRNA gene intron. Probably assists in splicing its own and other chloroplast group II introns. In Calycanthus floridus (Eastern sweetshrub), this protein is Maturase K.